Reading from the N-terminus, the 476-residue chain is Glycogen synthase (476 aa).

Residue Lys-15 coordinates ADP-alpha-D-glucose.

The protein belongs to the glycosyltransferase 1 family. Bacterial/plant glycogen synthase subfamily.

The enzyme catalyses [(1-&gt;4)-alpha-D-glucosyl](n) + ADP-alpha-D-glucose = [(1-&gt;4)-alpha-D-glucosyl](n+1) + ADP + H(+). It participates in glycan biosynthesis; glycogen biosynthesis. Synthesizes alpha-1,4-glucan chains using ADP-glucose. In Bacillus cereus (strain Q1), this protein is Glycogen synthase.